A 286-amino-acid chain; its full sequence is 4-diphosphocytidyl-2-C-methyl-D-erythritol kinase (286 aa).

Residue lysine 11 is part of the active site. Position 94-104 (proline 94–serine 104) interacts with ATP. Aspartate 136 is a catalytic residue.

The protein belongs to the GHMP kinase family. IspE subfamily.

It carries out the reaction 4-CDP-2-C-methyl-D-erythritol + ATP = 4-CDP-2-C-methyl-D-erythritol 2-phosphate + ADP + H(+). The protein operates within isoprenoid biosynthesis; isopentenyl diphosphate biosynthesis via DXP pathway; isopentenyl diphosphate from 1-deoxy-D-xylulose 5-phosphate: step 3/6. Functionally, catalyzes the phosphorylation of the position 2 hydroxy group of 4-diphosphocytidyl-2C-methyl-D-erythritol. The protein is 4-diphosphocytidyl-2-C-methyl-D-erythritol kinase of Pseudomonas entomophila (strain L48).